A 207-amino-acid polypeptide reads, in one-letter code: Small ribosomal subunit protein uS4 (207 aa).

The interval 26-47 (AINNKNYKPGQQGNSSSISKPS) is disordered. Over residues 28–39 (NNKNYKPGQQGN) the composition is skewed to polar residues. The 64-residue stretch at 95 to 158 (RRLDAVVYRL…KQIPIVIGAI (64 aa)) folds into the S4 RNA-binding domain.

It belongs to the universal ribosomal protein uS4 family. As to quaternary structure, part of the 30S ribosomal subunit. Contacts protein S5. The interaction surface between S4 and S5 is involved in control of translational fidelity.

In terms of biological role, one of the primary rRNA binding proteins, it binds directly to 16S rRNA where it nucleates assembly of the body of the 30S subunit. Functionally, with S5 and S12 plays an important role in translational accuracy. The chain is Small ribosomal subunit protein uS4 from Orientia tsutsugamushi (strain Boryong) (Rickettsia tsutsugamushi).